Consider the following 89-residue polypeptide: Small ribosomal subunit protein uS15 (89 aa).

It belongs to the universal ribosomal protein uS15 family. In terms of assembly, part of the 30S ribosomal subunit. Forms a bridge to the 50S subunit in the 70S ribosome, contacting the 23S rRNA.

Its function is as follows. One of the primary rRNA binding proteins, it binds directly to 16S rRNA where it helps nucleate assembly of the platform of the 30S subunit by binding and bridging several RNA helices of the 16S rRNA. Functionally, forms an intersubunit bridge (bridge B4) with the 23S rRNA of the 50S subunit in the ribosome. The protein is Small ribosomal subunit protein uS15 of Listeria innocua serovar 6a (strain ATCC BAA-680 / CLIP 11262).